Here is a 348-residue protein sequence, read N- to C-terminus: Selenide, water dikinase (348 aa).

Residue selenocysteine 17 is part of the active site. A non-standard amino acid (selenocysteine) is located at residue selenocysteine 17. Residues lysine 20 and 48–50 (TAD) each bind ATP. Aspartate 51 provides a ligand contact to Mg(2+). Residues aspartate 68, aspartate 91, and 138-140 (GHT) each bind ATP. Aspartate 91 contributes to the Mg(2+) binding site. Aspartate 226 serves as a coordination point for Mg(2+).

The protein belongs to the selenophosphate synthase 1 family. Class I subfamily. Homodimer. Requires Mg(2+) as cofactor.

It carries out the reaction hydrogenselenide + ATP + H2O = selenophosphate + AMP + phosphate + 2 H(+). Its function is as follows. Synthesizes selenophosphate from selenide and ATP. In Clostridioides difficile (strain 630) (Peptoclostridium difficile), this protein is Selenide, water dikinase.